The chain runs to 415 residues: MGKFLIKGGNPLKGKIKVSGAKNAALPIITAALLADTPSKLIDIPHLRDVTNLCNILEKMGAGVEFENNIVSIDPTTLTEAEADPELARKLRASYYILGVLLAKEGWARTSLPGGCNIGNRPIDLHLKGFKALGADVKLDHGIVEVKANKLKGARIYLDYPSVGATINIMLAATRAEGKTVIENAAREPEIVDLANYLTVMGAKIKGVGTDIIKIEGVDSLKGAEHRIIPDRIEAGTYMIAAALNKGDVFVDNVLAEHLKSLIAKLKEMGIQIKEEISGIKVVSNDKLKAVDVKTLPYPGFPTDLQSQIMVLLTQAEGTSLVIETVWENRFMHVDELKRMGADIKIDGHSALIKPSQLTGAEVTATDLRAGAALILAGLVAEGETEVRNINHVERGYEDIEEKLSGIGADIRKVK.

Residue 22–23 coordinates phosphoenolpyruvate; the sequence is KN. Arg-92 contributes to the UDP-N-acetyl-alpha-D-glucosamine binding site. The active-site Proton donor is Cys-116. Cys-116 carries the 2-(S-cysteinyl)pyruvic acid O-phosphothioketal modification. UDP-N-acetyl-alpha-D-glucosamine is bound by residues 121 to 125, Asp-304, and Val-326; that span reads RPIDL.

Belongs to the EPSP synthase family. MurA subfamily.

The protein localises to the cytoplasm. It catalyses the reaction phosphoenolpyruvate + UDP-N-acetyl-alpha-D-glucosamine = UDP-N-acetyl-3-O-(1-carboxyvinyl)-alpha-D-glucosamine + phosphate. The protein operates within cell wall biogenesis; peptidoglycan biosynthesis. In terms of biological role, cell wall formation. Adds enolpyruvyl to UDP-N-acetylglucosamine. The protein is UDP-N-acetylglucosamine 1-carboxyvinyltransferase of Halothermothrix orenii (strain H 168 / OCM 544 / DSM 9562).